A 274-amino-acid chain; its full sequence is MTTTINTPHKLIKNGIEIGDWVIHTSKNPILKSTEKEEWEKELVLNGLPEMVYGNNFIRLSNEKRDITIVFNCMDALKMLDKVADQSIKVSSSKKWEEINKGFEGQIEKSFEWTFSSPYTGTILTRGHCYSNFEKPIGLFENTTEKIDIEKLKRPDPILFFDDVLLYEDELADNGSSMLSVKIRVNNESVFLLSRFFLRVDDVICRCLDTRIYHEFGKDYLLKEVTFKESSFDIIKPYSENDPTLLTDSNFIVSKLPIKSLTTEKILLSYNDNK.

The protein belongs to the TIP41 family.

The polypeptide is TIP41-like protein (tiprl) (Dictyostelium discoideum (Social amoeba)).